The chain runs to 1486 residues: Chromosome partition protein MukB (1486 aa).

34–41 (GGNGAGKS) lines the ATP pocket. 3 coiled-coil regions span residues 326 to 418 (LEAD…QYNQ), 444 to 480 (LETF…QAYQ), and 509 to 603 (RHLA…RAPV). Residues 666–783 (PGGSEDQRLN…EVPLFGRAAR (118 aa)) form a flexible hinge region. Coiled-coil stretches lie at residues 835–923 (EAEI…AKLE), 977–1115 (EMLS…TAKA), and 1209–1266 (VEAI…QNVS).

It belongs to the SMC family. MukB subfamily. In terms of assembly, homodimerization via its hinge domain. Binds to DNA via its C-terminal region. Interacts, and probably forms a ternary complex, with MukE and MukF via its C-terminal region. The complex formation is stimulated by calcium or magnesium. Interacts with tubulin-related protein FtsZ.

The protein localises to the cytoplasm. Its subcellular location is the nucleoid. Functionally, plays a central role in chromosome condensation, segregation and cell cycle progression. Functions as a homodimer, which is essential for chromosome partition. Involved in negative DNA supercoiling in vivo, and by this means organize and compact chromosomes. May achieve or facilitate chromosome segregation by condensation DNA from both sides of a centrally located replisome during cell division. This chain is Chromosome partition protein MukB, found in Escherichia coli O81 (strain ED1a).